The sequence spans 352 residues: MDYQVSSPTYDIDYYTSEPCQKVNVKQIAARLLPPLYSLVFIFGFVGNILVVLILINCKRLKSMTDIYLLNLAISDLFFLLTVPFWAHYAAAQWDFGNTMCQLLTGLYFIGFFSGIFFIILLTIDRYLAIVHAVFALKARTVTFGVVTSVITWVVAVFASLPGIIFTRSQREGLHYTCSSHFPYSQYQFWKNFQTLKIVILGLVLPLLVMVICYSGILKTLLRCRNEKKRHRAVRLIFTIMIVYFLFWAPYNIVLLLNTFQEFFGLNNCSSSNRLDQAMQVTETLGMTHCCINPIIYAFVGEKFRNYLLVFFQKHIAKRFCKCCRIFQQEAPERASSVYTRSTGEQEISVGL.

The Extracellular segment spans residues 1-30; that stretch reads MDYQVSSPTYDIDYYTSEPCQKVNVKQIAA. Sulfotyrosine is present on Tyr-3. Residues Ser-6 and Ser-7 are each glycosylated (O-linked (GalNAc...) serine). Residues Tyr-10, Tyr-14, and Tyr-15 each carry the sulfotyrosine modification. Disulfide bonds link Cys-20–Cys-269 and Cys-101–Cys-178. A helical transmembrane segment spans residues 31–58; sequence RLLPPLYSLVFIFGFVGNILVVLILINC. At 59–68 the chain is on the cytoplasmic side; that stretch reads KRLKSMTDIY. A helical membrane pass occupies residues 69–89; the sequence is LLNLAISDLFFLLTVPFWAHY. Over 90–102 the chain is Extracellular; that stretch reads AAAQWDFGNTMCQ. Residues 103-124 form a helical membrane-spanning segment; that stretch reads LLTGLYFIGFFSGIFFIILLTI. Residues 125–141 are Cytoplasmic-facing; the sequence is DRYLAIVHAVFALKART. A helical transmembrane segment spans residues 142–166; sequence VTFGVVTSVITWVVAVFASLPGIIF. The Extracellular segment spans residues 167–198; it reads TRSQREGLHYTCSSHFPYSQYQFWKNFQTLKI. The chain crosses the membrane as a helical span at residues 199 to 218; that stretch reads VILGLVLPLLVMVICYSGIL. Residues 219–235 are Cytoplasmic-facing; the sequence is KTLLRCRNEKKRHRAVR. Residues 236–260 form a helical membrane-spanning segment; that stretch reads LIFTIMIVYFLFWAPYNIVLLLNTF. At 261–277 the chain is on the extracellular side; that stretch reads QEFFGLNNCSSSNRLDQ. The helical transmembrane segment at 278 to 301 threads the bilayer; that stretch reads AMQVTETLGMTHCCINPIIYAFVG. Topologically, residues 302–352 are cytoplasmic; the sequence is EKFRNYLLVFFQKHIAKRFCKCCRIFQQEAPERASSVYTRSTGEQEISVGL. S-palmitoyl cysteine attachment occurs at residues Cys-321, Cys-323, and Cys-324. Phosphoserine; by BARK1 is present on residues Ser-336, Ser-337, Ser-342, and Ser-349.

It belongs to the G-protein coupled receptor 1 family. Interacts with PRAF2. Efficient ligand binding to CCL3/MIP-1alpha and CCL4/MIP-1beta requires sulfation, O-glycosylation and sialic acid modifications. Glycosylation on Ser-6 is required for efficient binding of CCL4. Interacts with GRK2. Interacts with ARRB1 and ARRB2. Interacts with CNIH4. Interacts with S100A4; this interaction stimulates T-lymphocyte chemotaxis. Sulfated on at least 2 of the N-terminal tyrosines. Sulfation is required for efficient binding of the chemokines, CCL3 and CCL4. In terms of processing, palmitoylation in the C-terminal is important for cell surface expression. Post-translationally, phosphorylation on serine residues in the C-terminal is stimulated by binding CC chemokines especially by APO-RANTES. O-glycosylated, but not N-glycosylated. Ser-6 appears to be the major site even if Ser-7 may be also O-glycosylated. Also sialylated glycans present which contribute to chemokine binding. Thr-16 and Ser-17 may also be glycosylated and, if so, with small moieties such as a T-antigen.

The protein localises to the cell membrane. Receptor for a number of inflammatory CC-chemokines including CCL3/MIP-1-alpha, CCL4/MIP-1-beta and RANTES and subsequently transduces a signal by increasing the intracellular calcium ion level. May play a role in the control of granulocytic lineage proliferation or differentiation. Participates in T-lymphocyte migration to the infection site by acting as a chemotactic receptor. In Colobus polykomos (Western black-and-white colobus monkey), this protein is C-C chemokine receptor type 5 (CCR5).